Consider the following 126-residue polypeptide: UPF0102 protein plu4003 (126 aa).

The protein belongs to the UPF0102 family.

The protein is UPF0102 protein plu4003 of Photorhabdus laumondii subsp. laumondii (strain DSM 15139 / CIP 105565 / TT01) (Photorhabdus luminescens subsp. laumondii).